Reading from the N-terminus, the 570-residue chain is Ribosome-inactivating protein SNAI (570 aa).

The signal sequence occupies residues methionine 1–arginine 28. Asparagine 40, asparagine 62, and asparagine 144 each carry an N-linked (GlcNAc...) asparagine glycan. The active site involves glutamate 199. Asparagine 260 is a glycosylation site (N-linked (GlcNAc...) asparagine). Cystine bridges form between cysteine 284–cysteine 316, cysteine 332–cysteine 351, and cysteine 373–cysteine 385. 2 Ricin B-type lectin domains span residues valine 319–glycine 439 and valine 441–threonine 566. Residues aspartate 329 to tryptophan 369 form a 1-alpha repeat. The 1-beta repeat unit spans residues leucine 370–asparagine 405. The stretch at serine 408–aspartate 440 is one 1-gamma repeat. Residues lysine 452 to valine 489 form a 2-alpha repeat. Cysteine 455 and cysteine 470 form a disulfide bridge. Residue asparagine 492 is glycosylated (N-linked (GlcNAc...) asparagine). The 2-beta repeat unit spans residues arginine 493–asparagine 531. Cysteine 496 and cysteine 513 are joined by a disulfide. Asparagine 526 is a glycosylation site (N-linked (GlcNAc...) asparagine). A 2-gamma repeat occupies alanine 534–threonine 567.

Belongs to the ribosome-inactivating protein family. Type 2 RIP subfamily. As to quaternary structure, tetramer of four pairs of disulfide bound A-B chains. The precursor is processed in two chains, A and B, that are linked by a disulfide bond. A small truncated form corresponding roughly to the second ricin B-type lectin domain of the B chain, TrSNAI, can also be produced. In terms of processing, glycosylated. N-glycans of subunit A are (Man)2-3(Xyl)(GlcNAc)2(Fuc) at Asn-40, (GlcNAc)0-2(Man)3(Xyl)(GlcNAc)2(Fuc) or (Man)1-2(GlcNAc)2 at Asn-62, (Man)3(Xyl)(GlcNAc)2(Fuc)0-1 at Asn-144 and (GlcNAc)0-1(Man)3(Xyl)(GlcNAc)2(Fuc) at Asn-260. N-glycans of subunit B are (Man)3(Xyl)(GlcNAc)2(Fuc) at Asn-492 and (Man)6-9(GlcNAc)2 at Asn-526. Expressed in bark.

The catalysed reaction is Endohydrolysis of the N-glycosidic bond at one specific adenosine on the 28S rRNA.. Functionally, neu5Ac(alpha2-6)Gal/GalNAc specific agglutinin. Behaves as a type-2 ribosome-inactivating protein. Strongly inhibits mammalian but not plant ribosomes. The A chain is responsible for inhibiting protein synthesis through the catalytic inactivation of 60S ribosomal subunits by removing adenine from position 4,324 of 28S rRNA. The B chain binds to cell receptors and probably facilitates the entry into the cell of the A chain; B chains are also responsible for cell agglutination (lectin activity). Involved in plant defense against insects. Binds Neu5Ac(alpha2-6)Gal/GalNAc but has no clear agglutination activity. This Sambucus nigra (European elder) protein is Ribosome-inactivating protein SNAI.